The chain runs to 466 residues: Integrator complex subunit 12 (466 aa).

Residues 41 to 101 (KGNDSVYRPQ…EAEKRSADKM (61 aa)) form a disordered region. The span at 69 to 84 (KASSSTPSSSMLSKPL) shows a compositional bias: low complexity. The span at 85–101 (TSEKLKKEAEKRSADKM) shows a compositional bias: basic and acidic residues. The PHD-type zinc-finger motif lies at 156–212 (GLACVVCRQMTVFSGNQLVECQECHNLYHQDCHKPQVTDKDVNDPRLVWYCARCTRQ). Disordered stretches follow at residues 216 to 251 (MAQK…ELKA) and 311 to 466 (GTSS…KLKK). Polar residues-rich tracts occupy residues 218 to 233 (QKNQ…SAVS) and 311 to 329 (GTSS…SVQK). Low complexity predominate over residues 338 to 373 (PSKPGSVSKSGSGGSSSSSTIPIKPLPPLILGKTGL). The segment covering 374-386 (SRSMSSDNVSKTG) has biased composition (polar residues). A compositionally biased stretch (low complexity) spans 392 to 423 (PSSAGSVSSLSSQLGSNNGSSSAAGSNVTSSN). The span at 453 to 466 (QMVKKKAAQKKLKK) shows a compositional bias: basic residues.

It belongs to the Integrator subunit 12 family. As to quaternary structure, component of the Integrator complex, composed of core subunits INTS1, INTS2, INTS3, INTS4, INTS5, INTS6, INTS7, INTS8, INTS9/RC74, INTS10, INTS11/CPSF3L, INTS12, INTS13, INTS14 and INTS15. The core complex associates with protein phosphatase 2A subunits PPP2CA and PPP2R1A, to form the Integrator-PP2A (INTAC) complex.

Its subcellular location is the nucleus. Its function is as follows. Component of the integrator complex, a multiprotein complex that terminates RNA polymerase II (Pol II) transcription in the promoter-proximal region of genes. The integrator complex provides a quality checkpoint during transcription elongation by driving premature transcription termination of transcripts that are unfavorably configured for transcriptional elongation: the complex terminates transcription by (1) catalyzing dephosphorylation of the C-terminal domain (CTD) of Pol II subunit POLR2A/RPB1 and SUPT5H/SPT5, (2) degrading the exiting nascent RNA transcript via endonuclease activity and (3) promoting the release of Pol II from bound DNA. The integrator complex is also involved in terminating the synthesis of non-coding Pol II transcripts, such as enhancer RNAs (eRNAs), small nuclear RNAs (snRNAs), telomerase RNAs and long non-coding RNAs (lncRNAs). The polypeptide is Integrator complex subunit 12 (ints12) (Xenopus tropicalis (Western clawed frog)).